The primary structure comprises 63 residues: Large ribosomal subunit protein bL28 (63 aa).

Positions 1-20 (MSKRCAITGKGPMVGNNVSH) are disordered.

Belongs to the bacterial ribosomal protein bL28 family.

This chain is Large ribosomal subunit protein bL28, found in Campylobacter concisus (strain 13826).